A 390-amino-acid polypeptide reads, in one-letter code: Probable tRNA sulfurtransferase (390 aa).

Residues 58-161 enclose the THUMP domain; the sequence is EAVARRLQRV…DEGAYIYSRI (104 aa). ATP-binding positions include 179-180, 204-205, Arg261, Gly283, and Gln292; these read LI and HF.

Belongs to the ThiI family.

The protein resides in the cytoplasm. It catalyses the reaction [ThiI sulfur-carrier protein]-S-sulfanyl-L-cysteine + a uridine in tRNA + 2 reduced [2Fe-2S]-[ferredoxin] + ATP + H(+) = [ThiI sulfur-carrier protein]-L-cysteine + a 4-thiouridine in tRNA + 2 oxidized [2Fe-2S]-[ferredoxin] + AMP + diphosphate. The catalysed reaction is [ThiS sulfur-carrier protein]-C-terminal Gly-Gly-AMP + S-sulfanyl-L-cysteinyl-[cysteine desulfurase] + AH2 = [ThiS sulfur-carrier protein]-C-terminal-Gly-aminoethanethioate + L-cysteinyl-[cysteine desulfurase] + A + AMP + 2 H(+). The protein operates within cofactor biosynthesis; thiamine diphosphate biosynthesis. In terms of biological role, catalyzes the ATP-dependent transfer of a sulfur to tRNA to produce 4-thiouridine in position 8 of tRNAs, which functions as a near-UV photosensor. Also catalyzes the transfer of sulfur to the sulfur carrier protein ThiS, forming ThiS-thiocarboxylate. This is a step in the synthesis of thiazole, in the thiamine biosynthesis pathway. The sulfur is donated as persulfide by IscS. The protein is Probable tRNA sulfurtransferase of Moorella thermoacetica (strain ATCC 39073 / JCM 9320).